Consider the following 298-residue polypeptide: MKTLQSTLLLLLFVPLIKPAPPTQQDSRIIYDYGTDNFEESIFSQDYEDKYLDGKNIKEKETVIIPNEKSLQLQKDEAITPLPPKKENDEMPTCLLCVCLSGSVYCEEVDIDAVPPLPKESAYLYARFNKIKKLTAKDFADIPNLRRLDFTGNLIEDIEDGTFSKLSLLEELSLAENQLLKLPVLPPKLTLFNAKYNKIKSRGIKANAFKKLNNLTFLYLDHNALESVPLNLPESLRVIHLQFNNIASITDDTFCKANDTSYIRDRIEEIRLEGNPIVLGKHPNSFICLKRLPIGSYF.

A signal peptide spans 1 to 20; the sequence is MKTLQSTLLLLLFVPLIKPA. N88 carries an N-linked (GlcNAc...) (keratan sulfate) asparagine glycan. LRR repeat units lie at residues 112-131, 132-155, 156-179, 180-199, 200-225, 226-246, and 247-277; these read DAVP…FNKI, KKLT…GNLI, EDIE…ENQL, LKLP…YNKI, KSRG…HNAL, ESVP…FNNI, and ASIT…GNPI. N214 carries N-linked (GlcNAc...) (keratan sulfate) asparagine glycosylation. Cysteines 255 and 288 form a disulfide. N258 is a glycosylation site (N-linked (GlcNAc...) (keratan sulfate) asparagine).

It belongs to the small leucine-rich proteoglycan (SLRP) family. SLRP class III subfamily. Post-translationally, contains keratan sulfate.

The protein localises to the secreted. It localises to the extracellular space. Its subcellular location is the extracellular matrix. In terms of biological role, induces bone formation in conjunction with TGF-beta-1 or TGF-beta-2. The chain is Mimecan (OGN) from Pongo abelii (Sumatran orangutan).